A 142-amino-acid chain; its full sequence is MVLSAADKSNVKAAWGKVGGNAGAYGAEALERMFLSFPTTKTYFPHFDLSHGSAQVKGHGEKVAAALTKAVGHLDDLPGTLSDLSDLHAHKLRVDPVNFKLLSHTLLVTLACHLPNDFTPAVHASLDKFLASVGTVLTSKYR.

Residues 2 to 142 form the Globin domain; sequence VLSAADKSNV…VGTVLTSKYR (141 aa). Position 4 is a phosphoserine (serine 4). N6-succinyllysine is present on residues lysine 8 and lysine 12. The residue at position 17 (lysine 17) is an N6-acetyllysine; alternate. Lysine 17 is modified (N6-succinyllysine; alternate). The residue at position 25 (tyrosine 25) is a Phosphotyrosine. Serine 36 carries the phosphoserine modification. Lysine 41 is subject to N6-succinyllysine. The residue at position 50 (serine 50) is a Phosphoserine. Histidine 59 serves as a coordination point for O2. Histidine 88 is a binding site for heme b. Serine 103 carries the phosphoserine modification. At threonine 109 the chain carries Phosphothreonine. 2 positions are modified to phosphoserine: serine 125 and serine 132. 2 positions are modified to phosphothreonine: threonine 135 and threonine 138. A Phosphoserine modification is found at serine 139.

This sequence belongs to the globin family. Heterotetramer of two alpha chains and two beta chains. In terms of tissue distribution, red blood cells.

Functionally, involved in oxygen transport from the lung to the various peripheral tissues. In terms of biological role, hemopressin acts as an antagonist peptide of the cannabinoid receptor CNR1. Hemopressin-binding efficiently blocks cannabinoid receptor CNR1 and subsequent signaling. This is Hemoglobin subunit alpha (HBA) from Pantholops hodgsonii (Chiru).